Consider the following 332-residue polypeptide: Cysteine and histidine-rich domain-containing protein 1 (332 aa).

Alanine 2 carries the post-translational modification N-acetylalanine. The interval 2 to 77 is interaction with PPP5C; that stretch reads ALLCYNRACG…KPPEPVKPEV (76 aa). Zn(2+)-binding residues include cysteine 5, cysteine 10, cysteine 24, histidine 27, cysteine 42, and cysteine 43. CHORD domains are found at residues 5–64 and 157–216; these read CYNR…KGRH and CKNG…KGRH. Position 47 is a phosphothreonine (threonine 47). The residue at position 51 (serine 51) is a Phosphoserine. Zn(2+)-binding residues include cysteine 59, histidine 64, cysteine 157, cysteine 162, cysteine 176, histidine 179, cysteine 194, cysteine 195, cysteine 211, and histidine 216. Residues 62–82 form a disordered region; sequence GRHNSEKPPEPVKPEVKTTEK. The segment covering 64 to 82 has biased composition (basic and acidic residues); it reads HNSEKPPEPVKPEVKTTEK. The interaction with HSP90AA1 and HSP90AB1 stretch occupies residues 65-316; the sequence is NSEKPPEPVK…AEPMQWASLE (252 aa). Residues 227–316 form the CS domain; that stretch reads VVPCRHDWHQ…AEPMQWASLE (90 aa).

In terms of assembly, interacts with HSP90AA1, HSP90AB1, PPP5C, ROCK1 and ROCK2.

In terms of biological role, regulates centrosome duplication, probably by inhibiting the kinase activity of ROCK2. Proposed to act as co-chaperone for HSP90. May play a role in the regulation of NOD1 via a HSP90 chaperone complex. In vitro, has intrinsic chaperone activity. This function may be achieved by inhibiting association of ROCK2 with NPM1. Plays a role in ensuring the localization of the tyrosine kinase receptor EGFR to the plasma membrane, and thus ensures the subsequent regulation of EGFR activity and EGF-induced actin cytoskeleton remodeling. Involved in stress response. Prevents tumorigenesis. This is Cysteine and histidine-rich domain-containing protein 1 (CHORDC1) from Macaca fascicularis (Crab-eating macaque).